The sequence spans 421 residues: Testin (421 aa).

A PET domain is found at 92–199 (MILTNPVAAK…GDVKLPCEMD (108 aa)). Positions 133–164 (EKQPVAGSEGAQYRKKQLAKQLPAHDQDPSKC) are disordered. Basic and acidic residues predominate over residues 155-164 (PAHDQDPSKC). 3 consecutive LIM zinc-binding domains span residues 234–297 (YSCY…CDSE), 299–359 (PRCA…NHAV), and 362–421 (QGCH…KMMS).

The protein belongs to the prickle / espinas / testin family. Interacts via LIM domain 1 with ZYX. Interacts (via LIM domain 3) with ENAH and VASP. Interacts with ALKBH4, talin, actin, alpha-actinin, GRIP1 and PXN. Interacts (via LIM domain 2) with ACTL7A (via N-terminus). Heterodimer with ACTL7A; the heterodimer interacts with ENAH to form a heterotrimer.

It localises to the cytoplasm. The protein localises to the cell junction. The protein resides in the focal adhesion. In terms of biological role, scaffold protein that may play a role in cell adhesion, cell spreading and in the reorganization of the actin cytoskeleton. Plays a role in the regulation of cell proliferation. May act as a tumor suppressor. The chain is Testin (TES) from Microcebus murinus (Gray mouse lemur).